Reading from the N-terminus, the 712-residue chain is Polyribonucleotide nucleotidyltransferase (712 aa).

The Mg(2+) site is built by D493 and D499. The KH domain maps to P560–I619. The S1 motif domain occupies G629 to L697.

The protein belongs to the polyribonucleotide nucleotidyltransferase family. It depends on Mg(2+) as a cofactor.

It localises to the cytoplasm. It carries out the reaction RNA(n+1) + phosphate = RNA(n) + a ribonucleoside 5'-diphosphate. Its function is as follows. Involved in mRNA degradation. Catalyzes the phosphorolysis of single-stranded polyribonucleotides processively in the 3'- to 5'-direction. The chain is Polyribonucleotide nucleotidyltransferase from Synechococcus sp. (strain JA-2-3B'a(2-13)) (Cyanobacteria bacterium Yellowstone B-Prime).